A 109-amino-acid chain; its full sequence is Aquaporin-2 (109 aa).

Residues 1–6 (SIAFSR) lie on the Cytoplasmic side of the membrane. Residues 7–27 (AVFAEFLATLLFVFFGLGSAL) form a helical membrane-spanning segment. Topologically, residues 28–35 (NWPSALPS) are extracellular. Residues 36–54 (TLQIAMAFGLGIGTLVQAL) traverse the membrane as a helical segment. Residues 55 to 59 (GHVSG) are Cytoplasmic-facing. Positions 60 to 69 (AHINPAVTVA) form an intramembrane region, discontinuously helical. The NPA 1 motif lies at 63–65 (NPA). At 70–80 (CLVGCHVSFLR) the chain is on the cytoplasmic side. A helical transmembrane segment spans residues 81-102 (AAFYVAAQLLGAVAGAALLHEI). Topologically, residues 103 to 109 (TPAEVRG) are extracellular.

It belongs to the MIP/aquaporin (TC 1.A.8) family. In terms of assembly, homotetramer. Serine phosphorylation is necessary and sufficient for expression at the apical membrane. Endocytosis is not phosphorylation-dependent. In terms of processing, N-glycosylated.

Its subcellular location is the apical cell membrane. The protein resides in the basolateral cell membrane. It is found in the cell membrane. The protein localises to the cytoplasmic vesicle membrane. It localises to the golgi apparatus. Its subcellular location is the trans-Golgi network membrane. It catalyses the reaction H2O(in) = H2O(out). It carries out the reaction glycerol(in) = glycerol(out). Forms a water-specific channel that provides the plasma membranes of renal collecting duct with high permeability to water, thereby permitting water to move in the direction of an osmotic gradient. Plays an essential role in renal water homeostasis. Could also be permeable to glycerol. The sequence is that of Aquaporin-2 from Oryctolagus cuniculus (Rabbit).